Here is a 618-residue protein sequence, read N- to C-terminus: DNA mismatch repair protein MutL (618 aa).

Residues 367–381 (EPTAAREPATPRYSG) are compositionally biased toward low complexity. Residues 367 to 402 (EPTAAREPATPRYSGGASGGNGGRQSAGGWPHAQPG) form a disordered region. The span at 382–392 (GASGGNGGRQS) shows a compositional bias: gly residues.

The protein belongs to the DNA mismatch repair MutL/HexB family.

Its function is as follows. This protein is involved in the repair of mismatches in DNA. It is required for dam-dependent methyl-directed DNA mismatch repair. May act as a 'molecular matchmaker', a protein that promotes the formation of a stable complex between two or more DNA-binding proteins in an ATP-dependent manner without itself being part of a final effector complex. In Salmonella gallinarum (strain 287/91 / NCTC 13346), this protein is DNA mismatch repair protein MutL.